Consider the following 66-residue polypeptide: Protein translocase subunit SecE (66 aa).

Residues 29–49 traverse the membrane as a helical segment; sequence LVASTLVVVVAVFIFSPICLV.

This sequence belongs to the SecE/SEC61-gamma family. Component of the Sec protein translocase complex. Heterotrimer consisting of SecY, SecE and SecG subunits. The heterotrimers can form oligomers, although 1 heterotrimer is thought to be able to translocate proteins. Interacts with the ribosome. Interacts with SecDF, and other proteins may be involved. Interacts with SecA.

It is found in the cell inner membrane. In terms of biological role, essential subunit of the Sec protein translocation channel SecYEG. Clamps together the 2 halves of SecY. May contact the channel plug during translocation. The chain is Protein translocase subunit SecE from Rickettsia montanensis.